The following is a 254-amino-acid chain: Ubiquinone/menaquinone biosynthesis C-methyltransferase UbiE (254 aa).

Residues T77, D98, 126–127 (DA), and S143 contribute to the S-adenosyl-L-methionine site.

The protein belongs to the class I-like SAM-binding methyltransferase superfamily. MenG/UbiE family.

The catalysed reaction is a 2-demethylmenaquinol + S-adenosyl-L-methionine = a menaquinol + S-adenosyl-L-homocysteine + H(+). The enzyme catalyses a 2-methoxy-6-(all-trans-polyprenyl)benzene-1,4-diol + S-adenosyl-L-methionine = a 5-methoxy-2-methyl-3-(all-trans-polyprenyl)benzene-1,4-diol + S-adenosyl-L-homocysteine + H(+). It participates in quinol/quinone metabolism; menaquinone biosynthesis; menaquinol from 1,4-dihydroxy-2-naphthoate: step 2/2. It functions in the pathway cofactor biosynthesis; ubiquinone biosynthesis. Its function is as follows. Methyltransferase required for the conversion of demethylmenaquinol (DMKH2) to menaquinol (MKH2) and the conversion of 2-polyprenyl-6-methoxy-1,4-benzoquinol (DDMQH2) to 2-polyprenyl-3-methyl-6-methoxy-1,4-benzoquinol (DMQH2). In Blochmanniella pennsylvanica (strain BPEN), this protein is Ubiquinone/menaquinone biosynthesis C-methyltransferase UbiE.